Reading from the N-terminus, the 142-residue chain is MAPKKKVAGLIKLQIVAGQANPAPPVGPALGQHGVNIMEFCKAYNAATESQRGTVIPVEITVYEDRSFTFALKTPPAAKLLLKAAGVAKGSAEPHKTKVAKVTWDQVREIAETKKTDLNANDIDAAAKIIAGTARSMGITVE.

It belongs to the universal ribosomal protein uL11 family. In terms of assembly, part of the ribosomal stalk of the 50S ribosomal subunit. Interacts with L10 and the large rRNA to form the base of the stalk. L10 forms an elongated spine to which L12 dimers bind in a sequential fashion forming a multimeric L10(L12)X complex. Post-translationally, one or more lysine residues are methylated.

Forms part of the ribosomal stalk which helps the ribosome interact with GTP-bound translation factors. This chain is Large ribosomal subunit protein uL11, found in Mycobacterium ulcerans (strain Agy99).